The primary structure comprises 164 residues: OV-17 antigen (164 aa).

The first 16 residues, 1–16 (MKFVILLTIGLLVVAA), serve as a signal peptide directing secretion. The interval 24–43 (QQQQQQQQQRDEREIPPFLE) is disordered.

This sequence belongs to the SXP/RAL-2 family. As to expression, high levels in the hypodermal layer of the adult female.

This chain is OV-17 antigen (OV17), found in Onchocerca volvulus.